Here is a 108-residue protein sequence, read N- to C-terminus: uncharacterized protein (108 aa).

2 helical membrane-spanning segments follow: residues 51–71 and 86–106; these read VFAA…FCFL and PLST…KSLL.

The protein resides in the membrane. This is an uncharacterized protein from Saccharomyces cerevisiae (strain ATCC 204508 / S288c) (Baker's yeast).